The chain runs to 356 residues: MEPQTTAKVVLTTTKGPIEAELFAKEVPLACTRFLQLCKSGYYDSKPFYRVLPGELIQCGQQEAGNNTNSYPKLKDEPHTRIKLKRGYLAMASEYTENNRRVPNSATTEFFIALKEIPFSGTVIGKITGDTIYNAQDIARGELTEDGYPMYVQTVQNVEIVLGGGLVQETQKAGADAGADAESRENKSGSRDRPKKPKRKLQVNHDDDDDEEPVFTKKSVSKLVEDKFKKDNTNVAKKPKVEASAEQPEPAAVQATTTHHVQDAEDMTTEVDTVVSERLEKFRNMSRTKPDTKPKSMLISQEDRIRRRLGLGPDEDIPSDASDPSSDEDDDFDIFKHKFICPEDDKAEDSLITLGA.

A PPIase cyclophilin-type domain is found at 5 to 205 (TTAKVVLTTT…KPKRKLQVNH (201 aa)). Disordered stretches follow at residues 172–214 (KAGA…EEPV), 234–266 (NVAK…DAED), and 279–331 (LEKF…EDDD). Positions 181–192 (AESRENKSGSRD) are enriched in basic and acidic residues. Basic residues predominate over residues 193-202 (RPKKPKRKLQ). The span at 279 to 294 (LEKFRNMSRTKPDTKP) shows a compositional bias: basic and acidic residues.

It belongs to the cyclophilin-type PPIase family. CWC27 subfamily. Associated with the spliceosome.

Its subcellular location is the cytoplasm. It localises to the nucleus. It catalyses the reaction [protein]-peptidylproline (omega=180) = [protein]-peptidylproline (omega=0). PPIases accelerate the folding of proteins. It catalyzes the cis-trans isomerization of proline imidic peptide bonds in oligopeptides. Involved in pre-mRNA splicing. This Yarrowia lipolytica (strain CLIB 122 / E 150) (Yeast) protein is Peptidyl-prolyl isomerase CWC27 (CWC27).